A 254-amino-acid polypeptide reads, in one-letter code: 4-hydroxy-tetrahydrodipicolinate reductase (254 aa).

NAD(+)-binding positions include 8-13 (GCSGKM), aspartate 35, 86-88 (CST), and 110-113 (SANM). Catalysis depends on histidine 143, which acts as the Proton donor/acceptor. Residue histidine 144 participates in (S)-2,3,4,5-tetrahydrodipicolinate binding. Lysine 147 functions as the Proton donor in the catalytic mechanism. 153 to 154 (GT) provides a ligand contact to (S)-2,3,4,5-tetrahydrodipicolinate.

The protein belongs to the DapB family.

The protein localises to the cytoplasm. It catalyses the reaction (S)-2,3,4,5-tetrahydrodipicolinate + NAD(+) + H2O = (2S,4S)-4-hydroxy-2,3,4,5-tetrahydrodipicolinate + NADH + H(+). It carries out the reaction (S)-2,3,4,5-tetrahydrodipicolinate + NADP(+) + H2O = (2S,4S)-4-hydroxy-2,3,4,5-tetrahydrodipicolinate + NADPH + H(+). The protein operates within amino-acid biosynthesis; L-lysine biosynthesis via DAP pathway; (S)-tetrahydrodipicolinate from L-aspartate: step 4/4. Functionally, catalyzes the conversion of 4-hydroxy-tetrahydrodipicolinate (HTPA) to tetrahydrodipicolinate. The polypeptide is 4-hydroxy-tetrahydrodipicolinate reductase (Clostridium perfringens (strain SM101 / Type A)).